A 683-amino-acid chain; its full sequence is Methionine--tRNA ligase (683 aa).

The 'HIGH' region motif lies at 15–25; that stretch reads YYPSGKLHIGN. The short motif at 311-315 is the 'KMSKS' region element; sequence KMSKS. Lys314 lines the ATP pocket. The tRNA-binding domain maps to 581-683; the sequence is DFDKVELKVA…DNMVNGSLIS (103 aa).

Belongs to the class-I aminoacyl-tRNA synthetase family. MetG type 2B subfamily. As to quaternary structure, homodimer.

It is found in the cytoplasm. It catalyses the reaction tRNA(Met) + L-methionine + ATP = L-methionyl-tRNA(Met) + AMP + diphosphate. Its function is as follows. Is required not only for elongation of protein synthesis but also for the initiation of all mRNA translation through initiator tRNA(fMet) aminoacylation. The protein is Methionine--tRNA ligase of Lactiplantibacillus plantarum (strain ATCC BAA-793 / NCIMB 8826 / WCFS1) (Lactobacillus plantarum).